The sequence spans 167 residues: uncharacterized protein (167 aa).

An N-terminal signal peptide occupies residues 1 to 23 (MKRLHKRFLLATFCALFTATLQA). Cys-39 and Cys-77 are disulfide-bonded.

This sequence belongs to the fimbrial protein family.

The protein localises to the fimbrium. This is an uncharacterized protein from Escherichia coli (strain K12).